The sequence spans 192 residues: Adenine phosphoribosyltransferase 2 (192 aa).

This sequence belongs to the purine/pyrimidine phosphoribosyltransferase family. In terms of assembly, homodimer.

The protein resides in the cytoplasm. The catalysed reaction is AMP + diphosphate = 5-phospho-alpha-D-ribose 1-diphosphate + adenine. It functions in the pathway purine metabolism; AMP biosynthesis via salvage pathway; AMP from adenine: step 1/1. Functionally, catalyzes a salvage reaction resulting in the formation of AMP, that is energically less costly than de novo synthesis. May contribute to the recycling of adenine into adenylate nucleotides and the inactivation of cytokinins by phosphoribosylation. Possesses low activity toward adenine and cytokinins. This Arabidopsis thaliana (Mouse-ear cress) protein is Adenine phosphoribosyltransferase 2 (APT2).